A 178-amino-acid chain; its full sequence is Crossover junction endodeoxyribonuclease RuvC (178 aa).

Catalysis depends on residues D11, E71, and D143. Mg(2+) is bound by residues D11, E71, and D143.

Belongs to the RuvC family. Homodimer which binds Holliday junction (HJ) DNA. The HJ becomes 2-fold symmetrical on binding to RuvC with unstacked arms; it has a different conformation from HJ DNA in complex with RuvA. In the full resolvosome a probable DNA-RuvA(4)-RuvB(12)-RuvC(2) complex forms which resolves the HJ. It depends on Mg(2+) as a cofactor.

It is found in the cytoplasm. It carries out the reaction Endonucleolytic cleavage at a junction such as a reciprocal single-stranded crossover between two homologous DNA duplexes (Holliday junction).. The RuvA-RuvB-RuvC complex processes Holliday junction (HJ) DNA during genetic recombination and DNA repair. Endonuclease that resolves HJ intermediates. Cleaves cruciform DNA by making single-stranded nicks across the HJ at symmetrical positions within the homologous arms, yielding a 5'-phosphate and a 3'-hydroxyl group; requires a central core of homology in the junction. The consensus cleavage sequence is 5'-(A/T)TT(C/G)-3'. Cleavage occurs on the 3'-side of the TT dinucleotide at the point of strand exchange. HJ branch migration catalyzed by RuvA-RuvB allows RuvC to scan DNA until it finds its consensus sequence, where it cleaves and resolves the cruciform DNA. This is Crossover junction endodeoxyribonuclease RuvC from Neisseria meningitidis serogroup A / serotype 4A (strain DSM 15465 / Z2491).